The sequence spans 182 residues: Ribulose bisphosphate carboxylase small subunit, chloroplastic (182 aa).

Residues 1–58 (MASSMISSATIATVNCSSPAQANMVAPFTGLKSASAFPVTRKANNDITSLASNGGRVQ) constitute a chloroplast transit peptide.

Belongs to the RuBisCO small chain family. In terms of assembly, heterohexadecamer of 8 large and 8 small subunits.

The protein resides in the plastid. Its subcellular location is the chloroplast. Its function is as follows. RuBisCO catalyzes two reactions: the carboxylation of D-ribulose 1,5-bisphosphate, the primary event in carbon dioxide fixation, as well as the oxidative fragmentation of the pentose substrate. Both reactions occur simultaneously and in competition at the same active site. Although the small subunit is not catalytic it is essential for maximal activity. The polypeptide is Ribulose bisphosphate carboxylase small subunit, chloroplastic (Gossypium hirsutum (Upland cotton)).